Reading from the N-terminus, the 543-residue chain is 2,3-bisphosphoglycerate-independent phosphoglycerate mutase (543 aa).

Residues aspartate 20 and serine 73 each coordinate Mn(2+). The Phosphoserine intermediate role is filled by serine 73. Substrate is bound by residues histidine 134, 166 to 167 (RD), arginine 198, arginine 204, 278 to 281 (RGDR), and lysine 360. 5 residues coordinate Mn(2+): aspartate 428, histidine 432, aspartate 469, histidine 470, and histidine 488.

It belongs to the BPG-independent phosphoglycerate mutase family. In terms of assembly, monomer. It depends on Mn(2+) as a cofactor.

It carries out the reaction (2R)-2-phosphoglycerate = (2R)-3-phosphoglycerate. Its pathway is carbohydrate degradation; glycolysis; pyruvate from D-glyceraldehyde 3-phosphate: step 3/5. Functionally, catalyzes the interconversion of 2-phosphoglycerate and 3-phosphoglycerate. The protein is 2,3-bisphosphoglycerate-independent phosphoglycerate mutase of Rhodopirellula baltica (strain DSM 10527 / NCIMB 13988 / SH1).